We begin with the raw amino-acid sequence, 77 residues long: Translational regulator CsrA (77 aa).

Positions 58-77 (ANRRTAEETLDQASRLLSQK) are disordered. A compositionally biased stretch (polar residues) spans 68–77 (DQASRLLSQK).

It belongs to the CsrA/RsmA family. In terms of assembly, homodimer; the beta-strands of each monomer intercalate to form a hydrophobic core, while the alpha-helices form wings that extend away from the core.

The protein resides in the cytoplasm. In terms of biological role, a translational regulator that binds mRNA to regulate translation initiation and/or mRNA stability. Usually binds in the 5'-UTR at or near the Shine-Dalgarno sequence preventing ribosome-binding, thus repressing translation. Its main target seems to be the major flagellin gene, while its function is anatagonized by FliW. This chain is Translational regulator CsrA, found in Magnetococcus marinus (strain ATCC BAA-1437 / JCM 17883 / MC-1).